The following is a 201-amino-acid chain: Peptidyl-prolyl cis-trans isomerase FKBP11 (201 aa).

The N-terminal stretch at 1–27 is a signal peptide; that stretch reads MTLSPLLLPLQLLLLLLFSGAVCRAEA. One can recognise a PPIase FKBP-type domain in the interval 57–144; that stretch reads GDTLHIHYTG…QYDVELIALI (88 aa). The helical transmembrane segment at 156-176 threads the bilayer; the sequence is ILPLVGIAMVPALLGLIGYHL.

Belongs to the FKBP-type PPIase family. In terms of assembly, interacts with IFITM5.

It is found in the membrane. It catalyses the reaction [protein]-peptidylproline (omega=180) = [protein]-peptidylproline (omega=0). In terms of biological role, PPIases accelerate the folding of proteins during protein synthesis. The polypeptide is Peptidyl-prolyl cis-trans isomerase FKBP11 (Fkbp11) (Mus musculus (Mouse)).